The sequence spans 363 residues: Peptide-N(4)-(N-acetyl-beta-glucosaminyl)asparagine amidase (363 aa).

Zn(2+) is bound by residues cysteine 129, cysteine 132, cysteine 165, and cysteine 168. Cysteine 191 (nucleophile) is an active-site residue. Catalysis depends on residues histidine 218 and aspartate 235. Substrate is bound at residue glutamate 238. Residues 325–363 (RGKTQETKSESVSAASKSSNRGRESGSADWKAQRGEDGK) form a disordered region. Over residues 334–343 (ESVSAASKSS) the composition is skewed to low complexity. The span at 345-363 (RGRESGSADWKAQRGEDGK) shows a compositional bias: basic and acidic residues.

The protein belongs to the transglutaminase-like superfamily. PNGase family. In terms of assembly, interacts with RAD23 subunit of 26S proteasome. The cofactor is Zn(2+).

It is found in the cytoplasm. It localises to the nucleus. The catalysed reaction is Hydrolysis of an N(4)-(acetyl-beta-D-glucosaminyl)asparagine residue in which the glucosamine residue may be further glycosylated, to yield a (substituted) N-acetyl-beta-D-glucosaminylamine and a peptide containing an aspartate residue.. With respect to regulation, inhibited by Z-VAD-fmk, a well-known caspase inhibitor. Also inhibited by Man9GlcNAc2-iodoacetoamide. Both molecules inhibit enzyme activity through covalent binding of the carbohydrate to the single Cys-191 residue. Functionally, specifically deglycosylates the denatured form of N-linked glycoproteins in the cytoplasm and assists their proteasome-mediated degradation. Cleaves the beta-aspartyl-glucosamine (GlcNAc) of the glycan and the amide side chain of Asn, converting Asn to Asp. Prefers proteins containing high-mannose over those bearing complex type oligosaccharides. Can recognize misfolded proteins in the endoplasmic reticulum that are exported to the cytosol to be destroyed and deglycosylate them, while it has no activity toward native proteins. Deglycosylation is a prerequisite for subsequent proteasome-mediated degradation of some, but not all, misfolded glycoproteins. Involved in the formation of free oligosaccharide in cytosol. The protein is Peptide-N(4)-(N-acetyl-beta-glucosaminyl)asparagine amidase (PNG1) of Saccharomyces cerevisiae (strain ATCC 204508 / S288c) (Baker's yeast).